The following is a 270-amino-acid chain: Diaminopimelate epimerase (270 aa).

N15, Q49, and N66 together coordinate substrate. Catalysis depends on C75, which acts as the Proton donor. Substrate contacts are provided by residues 76-77 (GN), N155, N187, and 204-205 (ER). The active-site Proton acceptor is the C213. 214–215 (GS) is a substrate binding site.

Belongs to the diaminopimelate epimerase family. As to quaternary structure, homodimer.

The protein resides in the cytoplasm. The enzyme catalyses (2S,6S)-2,6-diaminopimelate = meso-2,6-diaminopimelate. Its pathway is amino-acid biosynthesis; L-lysine biosynthesis via DAP pathway; DL-2,6-diaminopimelate from LL-2,6-diaminopimelate: step 1/1. In terms of biological role, catalyzes the stereoinversion of LL-2,6-diaminopimelate (L,L-DAP) to meso-diaminopimelate (meso-DAP), a precursor of L-lysine and an essential component of the bacterial peptidoglycan. In Rickettsia rickettsii (strain Iowa), this protein is Diaminopimelate epimerase.